The chain runs to 458 residues: tRNA modification GTPase MnmE (458 aa).

Arg22, Glu84, and Arg123 together coordinate (6S)-5-formyl-5,6,7,8-tetrahydrofolate. Residues 220 to 379 (GIATAIIGRP…LEKAIADLFF (160 aa)) form the TrmE-type G domain. Residue Asn230 coordinates K(+). GTP contacts are provided by residues 230 to 235 (NVGKSS), 249 to 255 (TDIAGTT), and 274 to 277 (DTAG). Residue Ser234 participates in Mg(2+) binding. Thr249, Ile251, and Thr254 together coordinate K(+). Position 255 (Thr255) interacts with Mg(2+). Residue Lys458 participates in (6S)-5-formyl-5,6,7,8-tetrahydrofolate binding.

It belongs to the TRAFAC class TrmE-Era-EngA-EngB-Septin-like GTPase superfamily. TrmE GTPase family. Homodimer. Heterotetramer of two MnmE and two MnmG subunits. It depends on K(+) as a cofactor.

It localises to the cytoplasm. In terms of biological role, exhibits a very high intrinsic GTPase hydrolysis rate. Involved in the addition of a carboxymethylaminomethyl (cmnm) group at the wobble position (U34) of certain tRNAs, forming tRNA-cmnm(5)s(2)U34. This Bacillus thuringiensis (strain Al Hakam) protein is tRNA modification GTPase MnmE.